Reading from the N-terminus, the 325-residue chain is Glycerol-3-phosphate dehydrogenase [NAD(P)+] (325 aa).

Positions 14, 15, 35, and 109 each coordinate NADPH. Residues K109 and G137 each contribute to the sn-glycerol 3-phosphate site. Position 141 (A141) interacts with NADPH. K192, D247, S257, R258, and N259 together coordinate sn-glycerol 3-phosphate. The active-site Proton acceptor is the K192. Residue R258 participates in NADPH binding. 2 residues coordinate NADPH: L282 and E284.

This sequence belongs to the NAD-dependent glycerol-3-phosphate dehydrogenase family.

The protein resides in the cytoplasm. It catalyses the reaction sn-glycerol 3-phosphate + NAD(+) = dihydroxyacetone phosphate + NADH + H(+). It carries out the reaction sn-glycerol 3-phosphate + NADP(+) = dihydroxyacetone phosphate + NADPH + H(+). Its pathway is membrane lipid metabolism; glycerophospholipid metabolism. Its function is as follows. Catalyzes the reduction of the glycolytic intermediate dihydroxyacetone phosphate (DHAP) to sn-glycerol 3-phosphate (G3P), the key precursor for phospholipid synthesis. In Rickettsia conorii (strain ATCC VR-613 / Malish 7), this protein is Glycerol-3-phosphate dehydrogenase [NAD(P)+].